A 1648-amino-acid polypeptide reads, in one-letter code: AT-rich interactive domain-containing protein arid-1 (1648 aa).

Disordered regions lie at residues 150–270 and 284–307; these read ISEA…PVIN and RKLE…EEKL. 3 stretches are compositionally biased toward acidic residues: residues 166–193, 219–228, and 251–260; these read DDDE…DTEE, TQSEESSADS, and SDEEDQEDLA. The segment covering 261-270 has biased composition (polar residues); that stretch reads TTDSENPVIN. Residues 655 to 745 enclose the ARID domain; sequence AETKDLFVAM…FLESYLAINT (91 aa). Disordered regions lie at residues 763–935, 1095–1563, and 1628–1648; these read VLPG…KEDT, SEKR…KPHD, and KTAS…TPRP. A compositionally biased stretch (acidic residues) spans 848–860; the sequence is SDDVTDVPDDMTD. Basic and acidic residues-rich tracts occupy residues 861 to 878 and 925 to 935; these read HEDL…ERKS and SEGRGPRKEDT. Composition is skewed to acidic residues over residues 1102–1112 and 1145–1154; these read DDDESSDSDTD and GDEEAEEEVK. Positions 1165–1185 are enriched in low complexity; that stretch reads QESPPTTSQGTTTPETAATGG. The segment covering 1195-1208 has biased composition (pro residues); it reads YPPVPEELVPPPPV. A compositionally biased stretch (polar residues) spans 1213–1251; the sequence is FPSTDRFSSGGSSNYPTLSRQGSINSMASPMFSPNSDLS. The segment covering 1313 to 1326 has biased composition (basic and acidic residues); the sequence is RASERSIDSASEHH. Positions 1348-1357 are enriched in polar residues; sequence ISTTQPTDTS. A compositionally biased stretch (low complexity) spans 1377–1392; sequence ASPTLLTSGPLTLSSS. The span at 1393–1404 shows a compositional bias: pro residues; sequence APPPPPASPAPP. Composition is skewed to low complexity over residues 1474-1486 and 1531-1541; these read STTT…PKSI and TPTTMTTSTPT. Residues 1542-1551 are compositionally biased toward polar residues; that stretch reads RADSFQTQKN.

It localises to the nucleus. DNA-binding protein which modulates activity of several transcription factors. Plays a role in the modulation of endoplasmic reticulum (ER) homeostasis during chemical and pathogen stress, including exposure to the Gram-negative bacterium P.aeruginosa. The polypeptide is AT-rich interactive domain-containing protein arid-1 (Caenorhabditis elegans).